A 147-amino-acid polypeptide reads, in one-letter code: Urease accessory protein UreE (147 aa).

It belongs to the UreE family.

Its subcellular location is the cytoplasm. Its function is as follows. Involved in urease metallocenter assembly. Binds nickel. Probably functions as a nickel donor during metallocenter assembly. The sequence is that of Urease accessory protein UreE from Nostoc sp. (strain PCC 7120 / SAG 25.82 / UTEX 2576).